The primary structure comprises 417 residues: Odorant receptor 65a (417 aa).

Over 1-62 (MTELRSERKN…MNSEQRRLPR (62 aa)) the chain is Cytoplasmic. The helical transmembrane segment at 63 to 83 (IVAWQYFVSIQLATALASLFY) threads the bilayer. At 84-98 (GISESIGDIVNLGRD) the chain is on the extracellular side. Residues 99-119 (LVFIITIIFICFRLVFFAQYA) form a helical membrane-spanning segment. Over 120–152 (GELDVIIDALEDIYHWSIKGPATKEVQETKRLH) the chain is Cytoplasmic. Residues 153–173 (FLLFMALIITWFSFLILFMLI) form a helical membrane-spanning segment. Topologically, residues 174-206 (KISTPFWIESQTLPFHVSWPFQLHDPSKHPIAY) are extracellular. Residues 207 to 227 (IIIFVSQSTTMLYFLIWLGVV) traverse the membrane as a helical segment. At 228 to 290 (ENMGVSLFFE…TDRCNHIFNG (63 aa)) the chain is on the cytoplasmic side. A helical membrane pass occupies residues 291–311 (AFIMQMLINFLLVSLSLFEVL). Residues 312-316 (AAKKN) are Extracellular-facing. The chain crosses the membrane as a helical span at residues 317–337 (PQVAVEYMIIMLMTLGHLSFW). The Cytoplasmic segment spans residues 338-393 (SKFGDMFSKESEQVALAVYEAYDPNVGSKSIHRQFCFFIQRAQKPLIMKASPFPPF). Residues 394–414 (NLENYMFILKQCYSILTILAN) form a helical membrane-spanning segment. The Extracellular segment spans residues 415-417 (TLE).

Belongs to the insect chemoreceptor superfamily. Heteromeric odorant receptor channel (TC 1.A.69) family. Or49a subfamily. In terms of assembly, interacts with Orco. Complexes exist early in the endomembrane system in olfactory sensory neurons (OSNs), coupling these complexes to the conserved ciliary trafficking pathway. In terms of tissue distribution, expressed in olfactory sensory neurons in the antenna.

It is found in the cell membrane. Functionally, odorant receptor which mediates acceptance or avoidance behavior, depending on its substrates. The odorant receptor repertoire encodes a large collection of odor stimuli that vary widely in identity, intensity, and duration. May form a complex with Orco to form odorant-sensing units, providing sensitive and prolonged odorant signaling and calcium permeability. Involved in olfactory communication for modulating aggression through the sensing of the male-specific pheromone 11-cis-vaccenyl acetate (cVA). Although acute exposure to cVA elicites aggression through Or67d olfactory receptor neurons (ORNs), chronic cVA exposure reduces aggression through Or65a ORNs. Moreover, cVA leads to generalized learning with mated females. It is a major component of the male cuticular hydrocarbon profile, but it is not found on virgin females. During copulation, cVA is transferred to the female in ejaculate along with sperm and peptides that decrease her sexual receptivity. The chain is Odorant receptor 65a (Or65a) from Drosophila melanogaster (Fruit fly).